The sequence spans 450 residues: uncharacterized protein (450 aa).

Basic and acidic residues predominate over residues 141 to 151 (WLDKTDGEKNS). Disordered stretches follow at residues 141–171 (WLDKTDGEKNSEASSTDNSLENSTKGADSAG), 276–298 (LQDSENVQGDKGEKESKDDAVSQ), and 395–416 (DDEDEDNVDNSEGDEESLLSRN). Residues 152 to 171 (EASSTDNSLENSTKGADSAG) are compositionally biased toward polar residues. Over residues 283-298 (QGDKGEKESKDDAVSQ) the composition is skewed to basic and acidic residues. A compositionally biased stretch (acidic residues) spans 395-411 (DDEDEDNVDNSEGDEES).

This is an uncharacterized protein from Saccharomyces cerevisiae (strain ATCC 204508 / S288c) (Baker's yeast).